Here is a 632-residue protein sequence, read N- to C-terminus: POU domain, class 2, transcription factor 1 (632 aa).

A phosphothreonine mark is found at threonine 157 and threonine 163. Residues glutamate 167–glutamate 241 form the POU-specific domain. Serine 170 is subject to Phosphoserine. Residues leucine 243 to proline 258 show a composition bias toward low complexity. A disordered region spans residues leucine 243–threonine 273. The homeobox DNA-binding region spans arginine 268–asparagine 327. 2 positions are modified to phosphoserine: serine 274 and serine 337. The interval glycine 385–alanine 448 is disordered. Over residues threonine 394–proline 441 the composition is skewed to low complexity.

This sequence belongs to the POU transcription factor family. Class-2 subfamily. Interacts with POU2AF1; the interaction increases POU2F1 transactivation activity. Interacts with NR3C1, AR, PGR and HCFC1. In terms of processing, phosphorylated by PRKDC. Widely expressed.

The protein resides in the nucleus. Its function is as follows. Transcription factor that binds to the octamer motif (5'-ATTTGCAT-3') and activates the promoters of the genes for some small nuclear RNAs (snRNA) and of genes such as those for histone H2B and immunoglobulins. Modulates transcription transactivation by NR3C1, AR and PGR. This Rattus norvegicus (Rat) protein is POU domain, class 2, transcription factor 1 (Pou2f1).